A 263-amino-acid chain; its full sequence is Protein MARD1 (263 aa).

The segment at 219–263 (SFLSRCFTCKKNLDQKQDIYIYRGEKGFCSSECRYQEMLLDQMET) adopts an FLZ-type zinc-finger fold.

Belongs to the FLZ family. As to quaternary structure, interacts with KIN10 and KIN11 via its FLZ-type zinc finger domain. Interacts with KINB1 and KINB2 via its N-terminal part. Interacts with TZF4, TZF5 and TZF6. Interacts with MPK3 and MPK6.

The protein localises to the cytoplasm. Its subcellular location is the stress granule. It is found in the P-body. Functionally, may act as an adapter to facilitate the interaction of SnRK1 complex with effector proteins, conferring tissue- and stimulus-type specific differences in the SnRK1 regulation pathway. Involved in seed dormancy control. This Arabidopsis thaliana (Mouse-ear cress) protein is Protein MARD1.